A 295-amino-acid chain; its full sequence is Secreted frizzled-related protein 2 (295 aa).

An N-terminal signal peptide occupies residues 1-24 (MLQGPGSLLLLFLASHCCLGSARG). The FZ domain maps to 35–155 (YKRSNCKPIP…PQDNDLCIPL (121 aa)). 8 disulfides stabilise this stretch: Cys40-Cys103, Cys50-Cys96, Cys87-Cys125, Cys114-Cys152, Cys118-Cys142, Cys172-Cys245, Cys175-Cys247, and Cys190-Cys295. An NTR domain is found at 172–295 (CEACKNKNDD…ISRSIRKLQC (124 aa)).

This sequence belongs to the secreted frizzled-related protein (sFRP) family. As to expression, expressed in adipose tissue, heart, brain, skeletal muscle, pancreas, thymus, prostate, testis, ovary, small intestine and colon. Highest levels in adipose tissue, small intestine and colon.

The protein localises to the secreted. In terms of biological role, soluble frizzled-related proteins (sFRPS) function as modulators of Wnt signaling through direct interaction with Wnts. They have a role in regulating cell growth and differentiation in specific cell types. SFRP2 may be important for eye retinal development and for myogenesis. The protein is Secreted frizzled-related protein 2 (SFRP2) of Homo sapiens (Human).